The chain runs to 415 residues: Peptide chain release factor subunit 1 (415 aa).

It belongs to the eukaryotic release factor 1 family. As to quaternary structure, heterodimer of two subunits, one of which binds GTP.

It is found in the cytoplasm. In terms of biological role, directs the termination of nascent peptide synthesis (translation) in response to the termination codons UAA, UAG and UGA. This chain is Peptide chain release factor subunit 1, found in Thermococcus sibiricus (strain DSM 12597 / MM 739).